We begin with the raw amino-acid sequence, 378 residues long: Cobalt-precorrin-5B C(1)-methyltransferase (378 aa).

This sequence belongs to the CbiD family.

The enzyme catalyses Co-precorrin-5B + S-adenosyl-L-methionine = Co-precorrin-6A + S-adenosyl-L-homocysteine. It participates in cofactor biosynthesis; adenosylcobalamin biosynthesis; cob(II)yrinate a,c-diamide from sirohydrochlorin (anaerobic route): step 6/10. Functionally, catalyzes the methylation of C-1 in cobalt-precorrin-5B to form cobalt-precorrin-6A. In Tolumonas auensis (strain DSM 9187 / NBRC 110442 / TA 4), this protein is Cobalt-precorrin-5B C(1)-methyltransferase.